A 632-amino-acid chain; its full sequence is tRNA uridine 5-carboxymethylaminomethyl modification enzyme MnmG (632 aa).

Residues 15–20 (GAGHAG), I127, and S182 contribute to the FAD site. NAD(+) is bound at residue 276–290 (GPRYCPSIEDKIVRF). Residue Q373 coordinates FAD.

It belongs to the MnmG family. In terms of assembly, homodimer. Heterotetramer of two MnmE and two MnmG subunits. FAD serves as cofactor.

The protein localises to the cytoplasm. Its function is as follows. NAD-binding protein involved in the addition of a carboxymethylaminomethyl (cmnm) group at the wobble position (U34) of certain tRNAs, forming tRNA-cmnm(5)s(2)U34. The chain is tRNA uridine 5-carboxymethylaminomethyl modification enzyme MnmG from Streptococcus pyogenes serotype M12 (strain MGAS2096).